The primary structure comprises 134 residues: Ribulose bisphosphate carboxylase small subunit (134 aa).

The protein belongs to the RuBisCO small chain family. As to quaternary structure, heterohexadecamer of 8 large and 8 small subunits.

RuBisCO catalyzes two reactions: the carboxylation of D-ribulose 1,5-bisphosphate, the primary event in carbon dioxide fixation, as well as the oxidative fragmentation of the pentose substrate. Both reactions occur simultaneously and in competition at the same active site. Although the small subunit is not catalytic it is essential for maximal activity. This chain is Ribulose bisphosphate carboxylase small subunit, found in Bradyrhizobium diazoefficiens (strain JCM 10833 / BCRC 13528 / IAM 13628 / NBRC 14792 / USDA 110).